The following is an 84-amino-acid chain: U7-ctenitoxin-Pn1a (84 aa).

Residues 1–17 (MKLCILLVVLLITVVRA) form the signal peptide. Positions 18-38 (EEDILENEAEDISPAIKERSA) are excised as a propeptide. Cystine bridges form between Cys-41-Cys-56, Cys-48-Cys-61, Cys-55-Cys-78, and Cys-63-Cys-76.

Expressed by the venom gland.

The protein resides in the secreted. In terms of biological role, antagonist of L-type calcium channels (Cav1/CACNA1). Causes paralysis in the posterior limbs and gradual decreases in movement and aggression during 24 hours at dose levels of 5 ug per mouse. This is U7-ctenitoxin-Pn1a from Phoneutria nigriventer (Brazilian armed spider).